The primary structure comprises 120 residues: NAD(P)H-quinone oxidoreductase subunit 3, chloroplastic (120 aa).

Transmembrane regions (helical) follow at residues 9–29 (IFWA…LISG), 64–84 (MFAL…PWAM), and 88–108 (VLGV…IVGL).

The protein belongs to the complex I subunit 3 family. NDH is composed of at least 16 different subunits, 5 of which are encoded in the nucleus.

The protein resides in the plastid. It localises to the chloroplast thylakoid membrane. It catalyses the reaction a plastoquinone + NADH + (n+1) H(+)(in) = a plastoquinol + NAD(+) + n H(+)(out). It carries out the reaction a plastoquinone + NADPH + (n+1) H(+)(in) = a plastoquinol + NADP(+) + n H(+)(out). In terms of biological role, NDH shuttles electrons from NAD(P)H:plastoquinone, via FMN and iron-sulfur (Fe-S) centers, to quinones in the photosynthetic chain and possibly in a chloroplast respiratory chain. The immediate electron acceptor for the enzyme in this species is believed to be plastoquinone. Couples the redox reaction to proton translocation, and thus conserves the redox energy in a proton gradient. This is NAD(P)H-quinone oxidoreductase subunit 3, chloroplastic from Ceratophyllum demersum (Rigid hornwort).